Here is a 435-residue protein sequence, read N- to C-terminus: Homoserine dehydrogenase (435 aa).

Residues Thr-13, Val-14, Arg-43, and Lys-105 each contribute to the NADPH site. Position 14 (Val-14) interacts with NAD(+). Residues Val-14, Arg-43, and Lys-105 each contribute to the NADP(+) site. 4 residues coordinate Na(+): Glu-129, Val-132, Gly-134, and Ile-136. Lys-204 (proton donor) is an active-site residue. Disordered stretches follow at residues 255-274 (ARGV…TPDR) and 377-402 (RCDD…PDHV). 2 stretches are compositionally biased toward basic and acidic residues: residues 262 to 274 (RAPD…TPDR) and 377 to 391 (RCDD…AERR).

The protein belongs to the homoserine dehydrogenase family. It depends on a metal cation as a cofactor.

It carries out the reaction L-homoserine + NADP(+) = L-aspartate 4-semialdehyde + NADPH + H(+). The enzyme catalyses L-homoserine + NAD(+) = L-aspartate 4-semialdehyde + NADH + H(+). The protein operates within amino-acid biosynthesis; L-methionine biosynthesis via de novo pathway; L-homoserine from L-aspartate: step 3/3. Its pathway is amino-acid biosynthesis; L-threonine biosynthesis; L-threonine from L-aspartate: step 3/5. Catalyzes the conversion of L-aspartate-beta-semialdehyde (L-Asa) to L-homoserine (L-Hse), the third step in the biosynthesis of threonine and methionine from aspartate. This Methylobacillus glycogenes protein is Homoserine dehydrogenase (hom).